Consider the following 208-residue polypeptide: Small ribosomal subunit protein uS4 (208 aa).

The disordered stretch occupies residues 30 to 51; it reads KSSLEKRPYAPGQHGQRRSKIS. Residues 98–161 form the S4 RNA-binding domain; sequence RRLDNVVYRM…KNNPQVQRSI (64 aa).

It belongs to the universal ribosomal protein uS4 family. In terms of assembly, part of the 30S ribosomal subunit. Contacts protein S5. The interaction surface between S4 and S5 is involved in control of translational fidelity.

Functionally, one of the primary rRNA binding proteins, it binds directly to 16S rRNA where it nucleates assembly of the body of the 30S subunit. With S5 and S12 plays an important role in translational accuracy. The sequence is that of Small ribosomal subunit protein uS4 from Wolinella succinogenes (strain ATCC 29543 / DSM 1740 / CCUG 13145 / JCM 31913 / LMG 7466 / NCTC 11488 / FDC 602W) (Vibrio succinogenes).